We begin with the raw amino-acid sequence, 819 residues long: Leucine--tRNA ligase (819 aa).

The 'HIGH' region signature appears at 42 to 52 (PYPSGRLHMGH). The short motif at 576–580 (KMSKS) is the 'KMSKS' region element. Position 579 (Lys-579) interacts with ATP.

The protein belongs to the class-I aminoacyl-tRNA synthetase family.

The protein localises to the cytoplasm. It catalyses the reaction tRNA(Leu) + L-leucine + ATP = L-leucyl-tRNA(Leu) + AMP + diphosphate. In Nitrosococcus oceani (strain ATCC 19707 / BCRC 17464 / JCM 30415 / NCIMB 11848 / C-107), this protein is Leucine--tRNA ligase.